Consider the following 120-residue polypeptide: uncharacterized protein (120 aa).

It to M.jannaschii MJ1503.

This is an uncharacterized protein from Methanocaldococcus jannaschii (strain ATCC 43067 / DSM 2661 / JAL-1 / JCM 10045 / NBRC 100440) (Methanococcus jannaschii).